The following is a 200-amino-acid chain: Holliday junction branch migration complex subunit RuvA (200 aa).

Residues Met1 to Ala64 form a domain I region. Residues Glu65–Ile143 are domain II. A flexible linker region spans residues Ala144–Pro147. Residues Ala148 to Arg200 form a domain III region.

This sequence belongs to the RuvA family. Homotetramer. Forms an RuvA(8)-RuvB(12)-Holliday junction (HJ) complex. HJ DNA is sandwiched between 2 RuvA tetramers; dsDNA enters through RuvA and exits via RuvB. An RuvB hexamer assembles on each DNA strand where it exits the tetramer. Each RuvB hexamer is contacted by two RuvA subunits (via domain III) on 2 adjacent RuvB subunits; this complex drives branch migration. In the full resolvosome a probable DNA-RuvA(4)-RuvB(12)-RuvC(2) complex forms which resolves the HJ.

It is found in the cytoplasm. The RuvA-RuvB-RuvC complex processes Holliday junction (HJ) DNA during genetic recombination and DNA repair, while the RuvA-RuvB complex plays an important role in the rescue of blocked DNA replication forks via replication fork reversal (RFR). RuvA specifically binds to HJ cruciform DNA, conferring on it an open structure. The RuvB hexamer acts as an ATP-dependent pump, pulling dsDNA into and through the RuvAB complex. HJ branch migration allows RuvC to scan DNA until it finds its consensus sequence, where it cleaves and resolves the cruciform DNA. In Gluconacetobacter diazotrophicus (strain ATCC 49037 / DSM 5601 / CCUG 37298 / CIP 103539 / LMG 7603 / PAl5), this protein is Holliday junction branch migration complex subunit RuvA.